The chain runs to 112 residues: T cell receptor alpha variable 7 (112 aa).

The first 21 residues, 1-21 (MEKMRRPVLIIFCLCLGWANG), serve as a signal peptide directing secretion. The region spanning 22–112 (ENQVEHSPHF…DSATYFCAVD (91 aa)) is the Ig-like domain. Cysteines 44 and 109 form a disulfide. Residues Asn-84 and Asn-90 are each glycosylated (N-linked (GlcNAc...) asparagine).

In terms of assembly, alpha-beta TR is a heterodimer composed of an alpha and beta chain; disulfide-linked. The alpha-beta TR is associated with the transmembrane signaling CD3 coreceptor proteins to form the TR-CD3 (TcR or TCR). The assembly of alpha-beta TR heterodimers with CD3 occurs in the endoplasmic reticulum where a single alpha-beta TR heterodimer associates with one CD3D-CD3E heterodimer, one CD3G-CD3E heterodimer and one CD247 homodimer forming a stable octameric structure. CD3D-CD3E and CD3G-CD3E heterodimers preferentially associate with TR alpha and TR beta chains, respectively. The association of the CD247 homodimer is the last step of TcR assembly in the endoplasmic reticulum and is required for transport to the cell surface.

The protein resides in the cell membrane. V region of the variable domain of T cell receptor (TR) alpha chain that participates in the antigen recognition. Alpha-beta T cell receptors are antigen specific receptors which are essential to the immune response and are present on the cell surface of T lymphocytes. Recognize peptide-major histocompatibility (MH) (pMH) complexes that are displayed by antigen presenting cells (APC), a prerequisite for efficient T cell adaptive immunity against pathogens. Binding of alpha-beta TR to pMH complex initiates TR-CD3 clustering on the cell surface and intracellular activation of LCK that phosphorylates the ITAM motifs of CD3G, CD3D, CD3E and CD247 enabling the recruitment of ZAP70. In turn ZAP70 phosphorylates LAT, which recruits numerous signaling molecules to form the LAT signalosome. The LAT signalosome propagates signal branching to three major signaling pathways, the calcium, the mitogen-activated protein kinase (MAPK) kinase and the nuclear factor NF-kappa-B (NF-kB) pathways, leading to the mobilization of transcription factors that are critical for gene expression and essential for T cell growth and differentiation. The T cell repertoire is generated in the thymus, by V-(D)-J rearrangement. This repertoire is then shaped by intrathymic selection events to generate a peripheral T cell pool of self-MH restricted, non-autoaggressive T cells. Post-thymic interaction of alpha-beta TR with the pMH complexes shapes TR structural and functional avidity. The protein is T cell receptor alpha variable 7 of Homo sapiens (Human).